A 509-amino-acid chain; its full sequence is 2,3-bisphosphoglycerate-independent phosphoglycerate mutase (509 aa).

Mn(2+)-binding residues include D13 and S63. S63 (phosphoserine intermediate) is an active-site residue. Substrate contacts are provided by residues H124, 154–155 (RD), R186, R192, 261–264 (RPDR), and K335. Positions 400, 404, 441, 442, and 459 each coordinate Mn(2+).

Belongs to the BPG-independent phosphoglycerate mutase family. As to quaternary structure, monomer. Requires Mn(2+) as cofactor.

It catalyses the reaction (2R)-2-phosphoglycerate = (2R)-3-phosphoglycerate. The protein operates within carbohydrate degradation; glycolysis; pyruvate from D-glyceraldehyde 3-phosphate: step 3/5. Functionally, catalyzes the interconversion of 2-phosphoglycerate and 3-phosphoglycerate. This Desulforudis audaxviator (strain MP104C) protein is 2,3-bisphosphoglycerate-independent phosphoglycerate mutase.